The following is a 406-amino-acid chain: Tryptophan synthase beta chain (406 aa).

Lysine 99 carries the post-translational modification N6-(pyridoxal phosphate)lysine.

The protein belongs to the TrpB family. As to quaternary structure, tetramer of two alpha and two beta chains. The cofactor is pyridoxal 5'-phosphate.

The catalysed reaction is (1S,2R)-1-C-(indol-3-yl)glycerol 3-phosphate + L-serine = D-glyceraldehyde 3-phosphate + L-tryptophan + H2O. It participates in amino-acid biosynthesis; L-tryptophan biosynthesis; L-tryptophan from chorismate: step 5/5. Functionally, the beta subunit is responsible for the synthesis of L-tryptophan from indole and L-serine. The sequence is that of Tryptophan synthase beta chain from Methylobacterium nodulans (strain LMG 21967 / CNCM I-2342 / ORS 2060).